The chain runs to 327 residues: Aldo-keto reductase family 7 member A3 (327 aa).

Phosphoserine is present on S2. 3 residues coordinate NADP(+): M13, R18, and D40. The active-site Proton donor is the Y45. Residue H109 coordinates citrate. NADP(+) is bound by residues N140, N194, L196, G198, R204, and R218. Citrate-binding residues include Y228 and R231. 5 residues coordinate NADP(+): S286, Q290, Q293, N294, and R327.

Belongs to the aldo/keto reductase family. Aldo/keto reductase 2 subfamily. As to quaternary structure, homodimer. Heterodimer with AKR7A2.

The protein localises to the cytoplasm. The catalysed reaction is a primary alcohol + NADP(+) = an aldehyde + NADPH + H(+). It catalyses the reaction aflatoxin B1 dialdehyde + NADPH + H(+) = aflatoxin B1 C(6a)-monoaldehyde + NADP(+). It carries out the reaction aflatoxin B1 dialdehyde + NADPH + H(+) = aflatoxin B1 C(8)-monoaldehyde + NADP(+). The enzyme catalyses aflatoxin B1 C(6a)-monoaldehyde + NADPH + 2 H(+) = aflatoxin B1 triol + NADP(+). Inhibited by citrate. In terms of biological role, catalyzes the NADPH-dependent reduction of various carbonyl-containing compounds, including aldehydes, ketones, and toxic products from cellular metabolism or environmental exposure. Can reduce the dialdehyde form of aflatoxin B1 (AFB1) into alcohol derivatives, via monoaldehydes intermediates, thus preventing the formation of protein adducts that contribute to AFB1-induced toxicity. The chain is Aldo-keto reductase family 7 member A3 from Rattus norvegicus (Rat).